Here is a 275-residue protein sequence, read N- to C-terminus: Membrane protein insertase YidC 1 (275 aa).

The signal sequence occupies residues 1–25 (MRKVLRVKKNIKIARIVPLVLLLVA). A lipid anchor (N-palmitoyl cysteine) is attached at cysteine 26. Cysteine 26 carries S-diacylglycerol cysteine lipidation. Helical transmembrane passes span 58–78 (SIGV…MPLF), 129–149 (YASL…FQAL), 171–191 (LYLL…LTNL), 198–216 (VMMT…FMGF), and 222–240 (VVLY…LLLL).

The protein belongs to the OXA1/ALB3/YidC family. Type 2 subfamily.

The protein resides in the cell membrane. In terms of biological role, required for the insertion and/or proper folding and/or complex formation of integral membrane proteins into the membrane. Involved in integration of membrane proteins that insert both dependently and independently of the Sec translocase complex, as well as at least some lipoproteins. This chain is Membrane protein insertase YidC 1, found in Streptococcus pyogenes serotype M1.